Here is a 358-residue protein sequence, read N- to C-terminus: Nicotinate-nucleotide--dimethylbenzimidazole phosphoribosyltransferase (358 aa).

The active-site Proton acceptor is the glutamate 323.

The protein belongs to the CobT family.

It carries out the reaction 5,6-dimethylbenzimidazole + nicotinate beta-D-ribonucleotide = alpha-ribazole 5'-phosphate + nicotinate + H(+). It participates in nucleoside biosynthesis; alpha-ribazole biosynthesis; alpha-ribazole from 5,6-dimethylbenzimidazole: step 1/2. In terms of biological role, catalyzes the synthesis of alpha-ribazole-5'-phosphate from nicotinate mononucleotide (NAMN) and 5,6-dimethylbenzimidazole (DMB). In Oleidesulfovibrio alaskensis (strain ATCC BAA-1058 / DSM 17464 / G20) (Desulfovibrio alaskensis), this protein is Nicotinate-nucleotide--dimethylbenzimidazole phosphoribosyltransferase.